The chain runs to 362 residues: Protein OCA4 (362 aa).

Functionally, required for replication of Brome mosaic virus (BMV). This is Protein OCA4 (OCA4) from Saccharomyces cerevisiae (strain ATCC 204508 / S288c) (Baker's yeast).